The chain runs to 205 residues: Type-4 uracil-DNA glycosylase (205 aa).

2 residues coordinate [4Fe-4S] cluster: Cys13 and Cys16. Residues 40-42, Phe54, and Asn80 each bind uracil; that span reads GEG. [4Fe-4S] cluster-binding residues include Cys84 and Cys100. His155 lines the uracil pocket.

The protein belongs to the uracil-DNA glycosylase (UDG) superfamily. Type 4 (UDGa) family. Monomer.

The enzyme catalyses Hydrolyzes single-stranded DNA or mismatched double-stranded DNA and polynucleotides, releasing free uracil.. Product-inhibited by apurinic/apyrimidinic sites. Functionally, removes uracil bases that are present in DNA as a result of either deamination of cytosine or misincorporation of dUMP instead of dTMP. Can remove uracil from double-stranded DNA containing either a U/G, U/A, U/C or U/T base pair as well as from single-stranded DNA. Specifically recognizes uracil that is flipped out from double-stranded DNA. This Thermus thermophilus (strain ATCC 27634 / DSM 579 / HB8) protein is Type-4 uracil-DNA glycosylase.